We begin with the raw amino-acid sequence, 498 residues long: ATP synthase subunit beta, chloroplastic (498 aa).

172 to 179 contacts ATP; it reads GGAGVGKT.

Belongs to the ATPase alpha/beta chains family. F-type ATPases have 2 components, CF(1) - the catalytic core - and CF(0) - the membrane proton channel. CF(1) has five subunits: alpha(3), beta(3), gamma(1), delta(1), epsilon(1). CF(0) has four main subunits: a(1), b(1), b'(1) and c(9-12).

It is found in the plastid. The protein localises to the chloroplast thylakoid membrane. It carries out the reaction ATP + H2O + 4 H(+)(in) = ADP + phosphate + 5 H(+)(out). Its function is as follows. Produces ATP from ADP in the presence of a proton gradient across the membrane. The catalytic sites are hosted primarily by the beta subunits. This is ATP synthase subunit beta, chloroplastic from Canella winterana (Wild cinnamon).